Here is a 69-residue protein sequence, read N- to C-terminus: Putative membrane protein insertion efficiency factor (69 aa).

The protein belongs to the UPF0161 family.

The protein resides in the cell membrane. Could be involved in insertion of integral membrane proteins into the membrane. In Clostridium botulinum (strain Kyoto / Type A2), this protein is Putative membrane protein insertion efficiency factor.